The primary structure comprises 152 residues: D-aminoacyl-tRNA deacylase (152 aa).

The short motif at 142–143 (GP) is the Gly-cisPro motif, important for rejection of L-amino acids element.

Belongs to the DTD family. Homodimer.

Its subcellular location is the cytoplasm. It carries out the reaction glycyl-tRNA(Ala) + H2O = tRNA(Ala) + glycine + H(+). The catalysed reaction is a D-aminoacyl-tRNA + H2O = a tRNA + a D-alpha-amino acid + H(+). Functionally, an aminoacyl-tRNA editing enzyme that deacylates mischarged D-aminoacyl-tRNAs. Also deacylates mischarged glycyl-tRNA(Ala), protecting cells against glycine mischarging by AlaRS. Acts via tRNA-based rather than protein-based catalysis; rejects L-amino acids rather than detecting D-amino acids in the active site. By recycling D-aminoacyl-tRNA to D-amino acids and free tRNA molecules, this enzyme counteracts the toxicity associated with the formation of D-aminoacyl-tRNA entities in vivo and helps enforce protein L-homochirality. This Burkholderia vietnamiensis (strain G4 / LMG 22486) (Burkholderia cepacia (strain R1808)) protein is D-aminoacyl-tRNA deacylase.